The sequence spans 277 residues: Phosphatidylglycerol--prolipoprotein diacylglyceryl transferase (277 aa).

4 consecutive transmembrane segments (helical) span residues 22 to 42 (WYGV…LSEA), 51 to 71 (IIVD…RIYY), 89 to 109 (IWHG…TAII), and 116 to 136 (ISFW…QAIG). Arg137 contributes to the a 1,2-diacyl-sn-glycero-3-phospho-(1'-sn-glycerol) binding site. 3 helical membrane passes run 177-197 (QPTF…LLII), 205-225 (GELF…IEGM), and 235-255 (FRVS…LIIY).

It belongs to the Lgt family.

It is found in the cell membrane. The catalysed reaction is L-cysteinyl-[prolipoprotein] + a 1,2-diacyl-sn-glycero-3-phospho-(1'-sn-glycerol) = an S-1,2-diacyl-sn-glyceryl-L-cysteinyl-[prolipoprotein] + sn-glycerol 1-phosphate + H(+). It functions in the pathway protein modification; lipoprotein biosynthesis (diacylglyceryl transfer). Functionally, catalyzes the transfer of the diacylglyceryl group from phosphatidylglycerol to the sulfhydryl group of the N-terminal cysteine of a prolipoprotein, the first step in the formation of mature lipoproteins. The polypeptide is Phosphatidylglycerol--prolipoprotein diacylglyceryl transferase (Listeria welshimeri serovar 6b (strain ATCC 35897 / DSM 20650 / CCUG 15529 / CIP 8149 / NCTC 11857 / SLCC 5334 / V8)).